The following is a 283-amino-acid chain: Polyprenyl-phosphate transporter (283 aa).

The next 9 helical transmembrane spans lie at 27–47 (GTIA…SGIF), 51–71 (FWPS…AMGS), 85–105 (IPTM…LLKI), 112–132 (FTTK…VITL), 148–168 (TSLI…MLLP), 169–189 (GISG…MLAI), 197–217 (FAGL…FIIS), 230–250 (LMTF…VFPG), and 255–275 (IVMW…SLTL).

Belongs to the PopT family.

Its subcellular location is the cell membrane. With respect to regulation, active in alkaline conditions. Flippase that catalyzes the transport of undecaprenyl phosphate (UndP) across the cytoplasmic membrane, from the external side to the cytoplasmic side. Is involved in UndP recycling during peptidoglycan synthesis. Necessary for peptidoglycan maintenance. The protein is Polyprenyl-phosphate transporter of Staphylococcus aureus (strain NCTC 8325 / PS 47).